Here is a 439-residue protein sequence, read N- to C-terminus: Arginine biosynthesis bifunctional protein ArgJ, mitochondrial (439 aa).

Residues threonine 175, lysine 201, threonine 212, glutamate 301, asparagine 434, and serine 439 each contribute to the substrate site. Threonine 212 serves as the catalytic Nucleophile.

This sequence belongs to the ArgJ family. As to quaternary structure, heterodimer of an alpha and a beta chain. The alpha and beta chains are autoproteolytically processed from a single precursor protein within the mitochondrion.

It localises to the mitochondrion matrix. It catalyses the reaction N(2)-acetyl-L-ornithine + L-glutamate = N-acetyl-L-glutamate + L-ornithine. It carries out the reaction L-glutamate + acetyl-CoA = N-acetyl-L-glutamate + CoA + H(+). It functions in the pathway amino-acid biosynthesis; L-arginine biosynthesis; L-ornithine and N-acetyl-L-glutamate from L-glutamate and N(2)-acetyl-L-ornithine (cyclic): step 1/1. It participates in amino-acid biosynthesis; L-arginine biosynthesis; N(2)-acetyl-L-ornithine from L-glutamate: step 1/4. Functionally, catalyzes two activities which are involved in the cyclic version of arginine biosynthesis: the synthesis of acetylglutamate from glutamate and acetyl-CoA, and of ornithine by transacetylation between acetylornithine and glutamate. The polypeptide is Arginine biosynthesis bifunctional protein ArgJ, mitochondrial (ECM42) (Candida albicans (strain SC5314 / ATCC MYA-2876) (Yeast)).